The chain runs to 522 residues: Peptide chain release factor 3 (522 aa).

Residues 9 to 276 (KKRRTFAIIS…SFVNLAPAPQ (268 aa)) form the tr-type G domain. Residues 18–25 (SHPDAGKT), 86–90 (DTPGH), and 140–143 (NKLD) contribute to the GTP site.

Belongs to the TRAFAC class translation factor GTPase superfamily. Classic translation factor GTPase family. PrfC subfamily.

It localises to the cytoplasm. Increases the formation of ribosomal termination complexes and stimulates activities of RF-1 and RF-2. It binds guanine nucleotides and has strong preference for UGA stop codons. It may interact directly with the ribosome. The stimulation of RF-1 and RF-2 is significantly reduced by GTP and GDP, but not by GMP. The sequence is that of Peptide chain release factor 3 from Lactobacillus gasseri (strain ATCC 33323 / DSM 20243 / BCRC 14619 / CIP 102991 / JCM 1131 / KCTC 3163 / NCIMB 11718 / NCTC 13722 / AM63).